Consider the following 793-residue polypeptide: Protein smoothened (793 aa).

The signal sequence occupies residues 1–32; the sequence is MAAGRPVRGPELAPRRLLQLLLLVLLGGPGRG. Topologically, residues 33–237 are extracellular; sequence AALSGNVTGP…EAEHQDMHSY (205 aa). Positions 35 to 61 are disordered; the sequence is LSGNVTGPGPHSASGSSRRDVPVTSPP. Residue Asn-38 is glycosylated (N-linked (GlcNAc...) asparagine). 5 disulfides stabilise this stretch: Cys-68–Cys-182, Cys-74–Cys-138, Cys-82–Cys-131, Cys-122–Cys-158, and Cys-151–Cys-173. The FZ domain occupies 69-185; that stretch reads GRAAHCEPLR…DHFPEGCPNE (117 aa). Asp-99 contacts cholesterol. N-linked (GlcNAc...) asparagine glycosylation is present at Asn-192. Cystine bridges form between Cys-197–Cys-217, Cys-221–Cys-299, and Cys-318–Cys-394. A helical transmembrane segment spans residues 238-258; it reads IAAFGAVTGLCTLFTLATFVA. Over 259–265 the chain is Cytoplasmic; the sequence is DWRNSNR. A helical membrane pass occupies residues 266-286; sequence YPAVILFYVNACFFVGSIGWL. Topologically, residues 287–318 are extracellular; sequence AQFMDGARREIVCRADGTMRFGEPTSSETLSC. Residues 319–339 form a helical membrane-spanning segment; the sequence is VIIFVIVYYALMAGVVWFVVL. Topologically, residues 340–362 are cytoplasmic; sequence TYAWHTSFKALGTTYQPLSGKTS. Residues 363–383 traverse the membrane as a helical segment; that stretch reads YFHLLTWSLPFVLTVAILAVA. The Extracellular portion of the chain corresponds to 384-406; it reads QVDGDSVSGICFVGYKNYRYRAG. Tyr-398 contributes to the cholesterol binding site. Residues 407-427 form a helical membrane-spanning segment; it reads FVLAPIGLVLIVGGYFLIRGV. Residues 428–455 are Cytoplasmic-facing; that stretch reads MTLFSIKSNHPGLLSEKAASKINETMLR. A helical membrane pass occupies residues 456–476; it reads LGIFGFLAFGFVLITFSCHFY. Residues 477-528 lie on the Extracellular side of the membrane; sequence DFFNQAEWERSFRDYVLCQANVTIGLPTKKPIPDCEIKNRPSLLVEKINLFA. A disulfide bridge links Cys-494 with Cys-511. Residue Asn-497 is glycosylated (N-linked (GlcNAc...) asparagine). The chain crosses the membrane as a helical span at residues 529–549; it reads MFGTGIAMSTWVWTKATLLIW. Positions 542–573 are interaction with BBS5 and BBS7; the sequence is TKATLLIWRRTWCRLTGHSDDEPKRIKKSKMI. The Cytoplasmic portion of the chain corresponds to 550-793; that stretch reads RRTWCRLTGH…AEILDADSDF (244 aa). Residues Ser-560, Ser-578, and Ser-594 each carry the phosphoserine modification. Residues 574–657 form a required for interaction with PRKACA region; that stretch reads AKAFSKRREL…TPVPPEEQAN (84 aa). The interaction with DLG5 stretch occupies residues 585–597; it reads QNPGQELSFSMHT. Phosphothreonine is present on Thr-597. Phosphoserine is present on residues Ser-599 and Ser-642. 2 positions are modified to phosphothreonine: Thr-644 and Thr-648. The residue at position 666 (Ser-666) is a Phosphoserine. Residues 674 to 684 are compositionally biased toward basic residues; the sequence is GRKKKRRKRKK. The disordered stretch occupies residues 674 to 703; sequence GRKKKRRKRKKEVCPLRPAPELHHSAPVPA.

The protein belongs to the G-protein coupled receptor Fz/Smo family. Homodimer. Interacts (via C-terminus) with protein kinase A catalytic subunit PRKACA; interacts with free PRKACA subunits and the interaction leads to sequestration of PRKACA at the membrane, preventing PRKACA-mediated phosphorylation of GLI transcription factors. Interacts with ARRB2. Interacts with BBS5 and BBS7; the interactions are indicative for the association of SMO with the BBsome complex to facilitate ciliary localization of SMO. Interacts with KIF7, DLG5 and SDCBP. Interacts with GAS8/DRC4. Post-translationally, phosphorylation by GRK kinases is required for interaction with protein kinase A catalytic subunit PRKACA. During early somite stages of embryonic development, modestly up-regulated in the cells of the node (at protein level).

It localises to the cell membrane. The protein resides in the cell projection. The protein localises to the cilium. Its function is as follows. G protein-coupled receptor which associates with the patched protein (PTCH) to transduce hedgehog protein signaling. Binding of sonic hedgehog (SHH) to its receptor patched prevents inhibition of smoothened (SMO) by patched. When active, SMO binds to and sequesters protein kinase A catalytic subunit PRKACA at the cell membrane, preventing PRKACA-mediated phosphorylation of GLI transcription factors which releases the GLI proteins from PRKACA-mediated inhibition and allows for transcriptional activation of hedgehog pathway target genes. Required for the accumulation of KIF7, GLI2 and GLI3 in the cilia. Interacts with DLG5 at the ciliary base to induce the accumulation of KIF7 and GLI2 at the ciliary tip for GLI2 activation. The chain is Protein smoothened (Smo) from Mus musculus (Mouse).